A 435-amino-acid polypeptide reads, in one-letter code: MSLRSSYSVRSSTSQVPVSQMSQMSQMSIKRTTNVPTYRAARSTAAAGQGTRISSASYSGVRSGVGLPSMSSSIHVSATGATGDIMGNEKMAMQNLNDRLASYLRSETLEQANSKLELKIREALEKKGPEVCDYSRFQPIIDDLRRKIFDATSNNARLVLQIDNARLAADDFRVKYDSELSIRQGVEADIAGLRKVIDDTNMNRMNLESEIEALKEELIFLKKNHDNEVMELRNQISHSGVQVDVDAPKGQDLAKIMEEIRSKYEKMALKNQEELKAWHESQITEVQVQVIQNTEALEGARTEVNELRRQIQTLEIELESQRNLKGSLEATLRDTEMRYNMEIESLNAVTMQLEAELTQLRNNIQHQTQEYEALLNLKMKLEAEIATYRRLLDGGDFKLQDALEEQKRVKVMTVTQTLVDGKVVSSSTETKEKKF.

The segment covering 1–28 (MSLRSSYSVRSSTSQVPVSQMSQMSQMS) has biased composition (low complexity). The tract at residues 1–36 (MSLRSSYSVRSSTSQVPVSQMSQMSQMSIKRTTNVP) is disordered. Residues 2–88 (SLRSSYSVRS…TGATGDIMGN (87 aa)) are head. The segment at 89-123 (EKMAMQNLNDRLASYLRSETLEQANSKLELKIREA) is coil 1A. An IF rod domain is found at 89 to 399 (EKMAMQNLND…RLLDGGDFKL (311 aa)). The tract at residues 124–140 (LEKKGPEVCDYSRFQPI) is linker 1. The interval 141–232 (IDDLRRKIFD…KNHDNEVMEL (92 aa)) is coil 1B. The linker 12 stretch occupies residues 233 to 256 (RNQISHSGVQVDVDAPKGQDLAKI). Residues 257-394 (MEEIRSKYEK…IATYRRLLDG (138 aa)) are coil 2. The tail stretch occupies residues 395–435 (GDFKLQDALEEQKRVKVMTVTQTLVDGKVVSSSTETKEKKF).

This sequence belongs to the intermediate filament family. In terms of assembly, heterotetramer of two type I and two type II keratins. Keratin-18 associates with keratin-8. Post-translationally, phosphorylated. In terms of processing, proteolytically cleaved by caspases during epithelial cell apoptosis. As to expression, abundantly expressed in an even distribution throughout the optic nerve, localizing specifically to the astrocyte domains. Moderately expressed in spinal cord, brain, liver and oocytes.

In terms of biological role, when phosphorylated, plays a role in filament reorganization. The polypeptide is Keratin, type I cytoskeletal 18 (krt18) (Carassius auratus (Goldfish)).